The chain runs to 144 residues: Large ribosomal subunit protein uL15 (144 aa).

The interval 1-56 (MELNTLAPAPGAKSSKKRVGRGIGSGLGKTGGRGHKGQKSRSGGSVKPGFEGGQMP) is disordered. A compositionally biased stretch (gly residues) spans 21–31 (RGIGSGLGKTG).

This sequence belongs to the universal ribosomal protein uL15 family. As to quaternary structure, part of the 50S ribosomal subunit.

Functionally, binds to the 23S rRNA. This chain is Large ribosomal subunit protein uL15, found in Idiomarina loihiensis (strain ATCC BAA-735 / DSM 15497 / L2-TR).